The chain runs to 132 residues: Small ribosomal subunit protein uS8 (132 aa).

This sequence belongs to the universal ribosomal protein uS8 family. In terms of assembly, part of the 30S ribosomal subunit. Contacts proteins S5 and S12.

Functionally, one of the primary rRNA binding proteins, it binds directly to 16S rRNA central domain where it helps coordinate assembly of the platform of the 30S subunit. In Ligilactobacillus salivarius (strain UCC118) (Lactobacillus salivarius), this protein is Small ribosomal subunit protein uS8.